Reading from the N-terminus, the 243-residue chain is Ribosomal RNA small subunit methyltransferase G (243 aa).

S-adenosyl-L-methionine-binding positions include Gly-79, Phe-84, 130 to 131, and Arg-150; that span reads AE. Positions 219 to 243 are disordered; that stretch reads EKKKQTPNKYPRKPGTPGKDPIGKK.

Belongs to the methyltransferase superfamily. RNA methyltransferase RsmG family.

It localises to the cytoplasm. In terms of biological role, specifically methylates the N7 position of a guanine in 16S rRNA. This Pediococcus pentosaceus (strain ATCC 25745 / CCUG 21536 / LMG 10740 / 183-1w) protein is Ribosomal RNA small subunit methyltransferase G.